Consider the following 535-residue polypeptide: BAR/IMD domain-containing adapter protein 2 (535 aa).

The IMD domain maps to 1–250 (MSLSRSEEMH…VQLMQQMANS (250 aa)). Positions 88-153 (NQLEETLKSF…LRKKSQGSKN (66 aa)) form a coiled coil. Phosphoserine is present on residues Ser-262, Ser-324, Ser-326, and Ser-337. The tract at residues 299–370 (VMNGVAGPDS…TLPRSSSMAA (72 aa)) is disordered. Over residues 321–335 (QPKSLSPPQSQSKLS) the composition is skewed to low complexity. The residue at position 341 (Thr-341) is a Phosphothreonine. Residue Ser-347 is modified to Phosphoserine. Residues 349 to 368 (TPKNSYATTENKTLPRSSSM) show a composition bias toward polar residues. A Phosphothreonine modification is found at Thr-361. Phosphoserine is present on residues Ser-367, Ser-385, Ser-396, and Ser-455. Positions 375 to 438 (NGRMRVKAIF…PFSYTRVLDS (64 aa)) constitute an SH3 domain. Residues 445-477 (HMSLQQGKSSSTGNLLDKDDLALPPPDYGTSSR) form a disordered region. Residues 447 to 458 (SLQQGKSSSTGN) are compositionally biased toward polar residues.

Homodimer. Interacts with CDC42 and RAC1 that have been activated by GTP binding. Binds DIAPH1. Interacts with ATN1, ADGRB1, SHANK1, SHANK2, SHANK3, TIAM1, WASF1 and WASF2. Interacts with ENAH after recruitment of CDC42. Interacts with EPS8. Phosphorylated on tyrosine residues by INSR in response to insulin treatment. Detected in liver, brain, olfactory bulb, brain cortex, caudate putamen, hypothalamus and cerebellum.

The protein localises to the cytoplasm. Its subcellular location is the membrane. It is found in the cell projection. It localises to the filopodium. The protein resides in the ruffle. The protein localises to the cytoskeleton. Its function is as follows. Adapter protein that links membrane-bound small G-proteins to cytoplasmic effector proteins. Necessary for CDC42-mediated reorganization of the actin cytoskeleton and for RAC1-mediated membrane ruffling. Involved in the regulation of the actin cytoskeleton by WASF family members and the Arp2/3 complex. Plays a role in neurite growth. Acts syngeristically with ENAH to promote filipodia formation. Plays a role in the reorganization of the actin cytoskeleton in response to bacterial infection. Participates in actin bundling when associated with EPS8, promoting filopodial protrusions. This is BAR/IMD domain-containing adapter protein 2 (Baiap2) from Mus musculus (Mouse).